The chain runs to 495 residues: 4-aminobutyrate aminotransferase (495 aa).

Residue 160–161 (GS) participates in pyridoxal 5'-phosphate binding. Substrate is bound at residue Arg-216. N6-(pyridoxal phosphate)lysine is present on Lys-350. Pyridoxal 5'-phosphate is bound at residue Thr-374.

This sequence belongs to the class-III pyridoxal-phosphate-dependent aminotransferase family. In terms of assembly, homodimer. Requires pyridoxal 5'-phosphate as cofactor.

The catalysed reaction is 4-aminobutanoate + 2-oxoglutarate = succinate semialdehyde + L-glutamate. This chain is 4-aminobutyrate aminotransferase (gabT), found in Dictyostelium discoideum (Social amoeba).